Reading from the N-terminus, the 131-residue chain is UPF0102 protein YraN (131 aa).

Positions 1–19 are enriched in polar residues; the sequence is MATVPTRSGSPRQLTTKQT. The segment at 1-21 is disordered; the sequence is MATVPTRSGSPRQLTTKQTGD.

This sequence belongs to the UPF0102 family.

In Escherichia coli O45:K1 (strain S88 / ExPEC), this protein is UPF0102 protein YraN.